A 120-amino-acid chain; its full sequence is NAD(P)H-quinone oxidoreductase subunit 3, chloroplastic (120 aa).

3 consecutive transmembrane segments (helical) span residues 9–29, 64–84, and 88–108; these read IFWAFLIISSVIPILAFLISG, MFALVFVVFDVETVFLYPWAM, and VLGVSVFIEALIFVLIPIVGS.

It belongs to the complex I subunit 3 family. As to quaternary structure, NDH is composed of at least 16 different subunits, 5 of which are encoded in the nucleus.

Its subcellular location is the plastid. The protein resides in the chloroplast thylakoid membrane. The enzyme catalyses a plastoquinone + NADH + (n+1) H(+)(in) = a plastoquinol + NAD(+) + n H(+)(out). The catalysed reaction is a plastoquinone + NADPH + (n+1) H(+)(in) = a plastoquinol + NADP(+) + n H(+)(out). In terms of biological role, NDH shuttles electrons from NAD(P)H:plastoquinone, via FMN and iron-sulfur (Fe-S) centers, to quinones in the photosynthetic chain and possibly in a chloroplast respiratory chain. The immediate electron acceptor for the enzyme in this species is believed to be plastoquinone. Couples the redox reaction to proton translocation, and thus conserves the redox energy in a proton gradient. The protein is NAD(P)H-quinone oxidoreductase subunit 3, chloroplastic of Liriodendron tulipifera (Tuliptree).